Consider the following 346-residue polypeptide: 3-dehydroquinate synthase (346 aa).

NAD(+)-binding positions include 62 to 67 (DGEEYK), 96 to 100 (GVISD), 120 to 121 (TT), K133, K142, and 160 to 163 (FLRT). Zn(2+) contacts are provided by E175, H234, and H251.

It belongs to the sugar phosphate cyclases superfamily. Dehydroquinate synthase family. Requires Co(2+) as cofactor. Zn(2+) serves as cofactor. It depends on NAD(+) as a cofactor.

The protein resides in the cytoplasm. The catalysed reaction is 7-phospho-2-dehydro-3-deoxy-D-arabino-heptonate = 3-dehydroquinate + phosphate. It participates in metabolic intermediate biosynthesis; chorismate biosynthesis; chorismate from D-erythrose 4-phosphate and phosphoenolpyruvate: step 2/7. Functionally, catalyzes the conversion of 3-deoxy-D-arabino-heptulosonate 7-phosphate (DAHP) to dehydroquinate (DHQ). This chain is 3-dehydroquinate synthase, found in Campylobacter curvus (strain 525.92).